A 498-amino-acid polypeptide reads, in one-letter code: ATP synthase subunit beta, chloroplastic (498 aa).

172-179 (GGAGVGKT) serves as a coordination point for ATP.

It belongs to the ATPase alpha/beta chains family. In terms of assembly, F-type ATPases have 2 components, CF(1) - the catalytic core - and CF(0) - the membrane proton channel. CF(1) has five subunits: alpha(3), beta(3), gamma(1), delta(1), epsilon(1). CF(0) has four main subunits: a(1), b(1), b'(1) and c(9-12).

The protein localises to the plastid. The protein resides in the chloroplast thylakoid membrane. The enzyme catalyses ATP + H2O + 4 H(+)(in) = ADP + phosphate + 5 H(+)(out). Its function is as follows. Produces ATP from ADP in the presence of a proton gradient across the membrane. The catalytic sites are hosted primarily by the beta subunits. The polypeptide is ATP synthase subunit beta, chloroplastic (Oryza nivara (Indian wild rice)).